The primary structure comprises 896 residues: UPF0182 protein GM21_2279 (896 aa).

Transmembrane regions (helical) follow at residues 6–26, 46–66, 99–119, 158–180, 201–221, 245–265, and 271–291; these read MTFI…LLSF, VYAQ…FLQL, LVRP…GNWG, LLKS…AYYV, LAVL…LESF, TLRI…LGIW, and LALG…RVYP.

Belongs to the UPF0182 family.

The protein resides in the cell membrane. The chain is UPF0182 protein GM21_2279 from Geobacter sp. (strain M21).